Reading from the N-terminus, the 929-residue chain is Collagen alpha-1(XII) chain (929 aa).

Residues 1-49 (DVEIFAVGVKDAVRSELEAIATPPTATHVYTVEDFDAFQRISFELTQSI) enclose the VWFA 1 domain. Fibronectin type-III domains lie at 67–156 (PPRD…LEVR), 158–250 (APRN…VGEP), 251–340 (KNLR…LQER), 342–432 (SPRD…ASPD), 434–521 (KIVK…LSPF), and 523–613 (APRS…TLRD). The N-linked (GlcNAc...) asparagine glycan is linked to Asn-98. O-linked (Xyl...) (chondroitin sulfate) serine glycosylation is found at Ser-231, Ser-324, and Ser-415. The VWFA 2 domain maps to 633-805 (DIVLLVDGSW…SLLTNIVNDL (173 aa)). One can recognise a Fibronectin type-III 7 domain in the interval 821–910 (PPSNLVTSEP…AGTETTLPIP (90 aa)).

Belongs to the fibril-associated collagens with interrupted helices (FACIT) family. As to quaternary structure, trimer of identical chains each containing 190 kDa of non-triple-helical sequences. The triple-helical tail is stabilized by disulfide bonds at each end. In terms of processing, prolines at the third position of the tripeptide repeating unit (G-X-Y) are hydroxylated in some or all of the chains.

The protein localises to the secreted. It is found in the extracellular space. The protein resides in the extracellular matrix. In terms of biological role, type XII collagen interacts with type I collagen-containing fibrils, the COL1 domain could be associated with the surface of the fibrils, and the COL2 and NC3 domains may be localized in the perifibrillar matrix. Could play a developmental role in regeneration. The protein is Collagen alpha-1(XII) chain of Notophthalmus viridescens (Eastern newt).